The chain runs to 283 residues: Pantothenate synthetase (283 aa).

An ATP-binding site is contributed by 30-37 (MGYLHDGH). The active-site Proton donor is histidine 37. Glutamine 61 lines the (R)-pantoate pocket. Glutamine 61 lines the beta-alanine pocket. Residue 148–151 (GQKD) participates in ATP binding. A (R)-pantoate-binding site is contributed by glutamine 154. 185–188 (MSSR) is a binding site for ATP.

The protein belongs to the pantothenate synthetase family. As to quaternary structure, homodimer.

Its subcellular location is the cytoplasm. The enzyme catalyses (R)-pantoate + beta-alanine + ATP = (R)-pantothenate + AMP + diphosphate + H(+). It functions in the pathway cofactor biosynthesis; (R)-pantothenate biosynthesis; (R)-pantothenate from (R)-pantoate and beta-alanine: step 1/1. Its function is as follows. Catalyzes the condensation of pantoate with beta-alanine in an ATP-dependent reaction via a pantoyl-adenylate intermediate. This is Pantothenate synthetase from Carboxydothermus hydrogenoformans (strain ATCC BAA-161 / DSM 6008 / Z-2901).